The sequence spans 546 residues: Oncoprotein-induced transcript 3 protein (546 aa).

The signal sequence occupies residues 1–19; sequence MPLSLLLTCLSTTVTLVSP. Residues Asn-89 and Asn-116 are each glycosylated (N-linked (GlcNAc...) asparagine). The EGF-like; calcium-binding domain occupies 182–222; that stretch reads DENECEHNNGGCSEICVNLKNSHRCACGVGRVLRSDGKTCE. 3 cysteine pairs are disulfide-bonded: Cys-186-Cys-197, Cys-193-Cys-206, and Cys-208-Cys-221. Positions 261–516 constitute a ZP domain; sequence TCQVPVLCKS…SRCAQGCHRR (256 aa). N-linked (GlcNAc...) asparagine glycosylation is present at Asn-299.

As to expression, liver-specific. Expressed only in the hepatocytes.

The protein resides in the nucleus envelope. May be involved in hepatocellular function and development. The sequence is that of Oncoprotein-induced transcript 3 protein (Oit3) from Mus musculus (Mouse).